Consider the following 156-residue polypeptide: Putative pre-16S rRNA nuclease (156 aa).

Belongs to the YqgF nuclease family.

It localises to the cytoplasm. Could be a nuclease involved in processing of the 5'-end of pre-16S rRNA. This is Putative pre-16S rRNA nuclease from Gloeobacter violaceus (strain ATCC 29082 / PCC 7421).